A 120-amino-acid polypeptide reads, in one-letter code: Ribonuclease P protein component (120 aa).

This sequence belongs to the RnpA family. Consists of a catalytic RNA component (M1 or rnpB) and a protein subunit.

It carries out the reaction Endonucleolytic cleavage of RNA, removing 5'-extranucleotides from tRNA precursor.. Its function is as follows. RNaseP catalyzes the removal of the 5'-leader sequence from pre-tRNA to produce the mature 5'-terminus. It can also cleave other RNA substrates such as 4.5S RNA. The protein component plays an auxiliary but essential role in vivo by binding to the 5'-leader sequence and broadening the substrate specificity of the ribozyme. The protein is Ribonuclease P protein component of Chlamydia trachomatis serovar D (strain ATCC VR-885 / DSM 19411 / UW-3/Cx).